Consider the following 102-residue polypeptide: Small ribosomal subunit protein uS10 (102 aa).

It belongs to the universal ribosomal protein uS10 family. As to quaternary structure, part of the 30S ribosomal subunit.

In terms of biological role, involved in the binding of tRNA to the ribosomes. In Thermococcus kodakarensis (strain ATCC BAA-918 / JCM 12380 / KOD1) (Pyrococcus kodakaraensis (strain KOD1)), this protein is Small ribosomal subunit protein uS10.